The following is a 531-amino-acid chain: Lysine--tRNA ligase, mitochondrial (531 aa).

The transit peptide at 1 to 18 (MISRGLLSKGILSIIKRK) directs the protein to the mitochondrion.

This sequence belongs to the class-II aminoacyl-tRNA synthetase family.

The protein resides in the mitochondrion. It catalyses the reaction tRNA(Lys) + L-lysine + ATP = L-lysyl-tRNA(Lys) + AMP + diphosphate. This Schizosaccharomyces pombe (strain 972 / ATCC 24843) (Fission yeast) protein is Lysine--tRNA ligase, mitochondrial (msk1).